The following is a 352-amino-acid chain: Histidine biosynthesis bifunctional protein HisB (352 aa).

The segment at Met-1 to Phe-164 is histidinol-phosphatase. Asp-9 (nucleophile) is an active-site residue. The Mg(2+) site is built by Asp-9 and Asp-11. Asp-11 serves as the catalytic Proton donor. 4 residues coordinate Zn(2+): Cys-93, His-95, Cys-101, and Cys-103. Position 130 (Asp-130) interacts with Mg(2+). Residues Arg-165–Ile-352 form an imidazoleglycerol-phosphate dehydratase region.

The protein in the N-terminal section; belongs to the histidinol-phosphatase family. It in the C-terminal section; belongs to the imidazoleglycerol-phosphate dehydratase family. The cofactor is Mg(2+). Zn(2+) is required as a cofactor.

It is found in the cytoplasm. The catalysed reaction is D-erythro-1-(imidazol-4-yl)glycerol 3-phosphate = 3-(imidazol-4-yl)-2-oxopropyl phosphate + H2O. It catalyses the reaction L-histidinol phosphate + H2O = L-histidinol + phosphate. Its pathway is amino-acid biosynthesis; L-histidine biosynthesis; L-histidine from 5-phospho-alpha-D-ribose 1-diphosphate: step 6/9. It functions in the pathway amino-acid biosynthesis; L-histidine biosynthesis; L-histidine from 5-phospho-alpha-D-ribose 1-diphosphate: step 8/9. The chain is Histidine biosynthesis bifunctional protein HisB from Campylobacter jejuni subsp. doylei (strain ATCC BAA-1458 / RM4099 / 269.97).